A 600-amino-acid chain; its full sequence is Integrator complex subunit 11 (600 aa).

His-68, His-70, Asp-72, His-73, His-157, and Asp-178 together coordinate Zn(2+). Residues His-68–His-73 carry the HXHXDH motif motif. Glu-203 is an active-site residue. A Glycyl lysine isopeptide (Lys-Gly) (interchain with G-Cter in SUMO) cross-link involves residue Lys-381. His-414 contacts Zn(2+). Residues Lys-462 and Lys-475 each participate in a glycyl lysine isopeptide (Lys-Gly) (interchain with G-Cter in SUMO) cross-link. Positions Leu-469 to Leu-479 match the Nuclear localization signal motif.

It belongs to the metallo-beta-lactamase superfamily. RNA-metabolizing metallo-beta-lactamase-like family. INTS11 subfamily. As to quaternary structure, component of the Integrator complex, composed of core subunits INTS1, INTS2, INTS3, INTS4, INTS5, INTS6, INTS7, INTS8, INTS9/RC74, INTS10, INTS11/CPSF3L, INTS12, INTS13, INTS14 and INTS15. The core complex associates with protein phosphatase 2A subunits PPP2CA and PPP2R1A, to form the Integrator-PP2A (INTAC) complex. INTS11 is part of the RNA endonuclease subcomplex, composed of INTS4, INTS9, INTS11 and inositol hexakisphosphate (InsP6). Interacts with WDR73; interaction is required for the assembly of the RNA endonuclease subcomplex in the cytoplasm. Interacts with BRAT1; interaction is required for the assembly of the RNA endonuclease subcomplex and inhibits the endonuclease activity of INTS11 before formation of mature integrator complex. Zn(2+) serves as cofactor. Post-translationally, sumoylated; sumoylation regulates its subcellular location and is required for integrator complex integrity.

The protein resides in the nucleus. The protein localises to the cytoplasm. The RNA endonuclease activity is inhibited by BRAT1 that forms hyrogen bond and hydrophobic interactions with the active site. RNA endonuclease component of the integrator complex, a multiprotein complex that terminates RNA polymerase II (Pol II) transcription in the promoter-proximal region of genes. The integrator complex provides a quality checkpoint during transcription elongation by driving premature transcription termination of transcripts that are unfavorably configured for transcriptional elongation: the complex terminates transcription by (1) catalyzing dephosphorylation of the C-terminal domain (CTD) of Pol II subunit POLR2A/RPB1 and SUPT5H/SPT5, (2) degrading the exiting nascent RNA transcript via endonuclease activity and (3) promoting the release of Pol II from bound DNA. The integrator complex is also involved in terminating the synthesis of non-coding Pol II transcripts, such as enhancer RNAs (eRNAs), small nuclear RNAs (snRNAs), telomerase RNAs and long non-coding RNAs (lncRNAs). Within the integrator complex, INTS11 constitutes the RNA endonuclease subunit that degrades exiting nascent RNA transcripts. Mediates recruitment of cytoplasmic dynein to the nuclear envelope, probably as component of the integrator complex. The polypeptide is Integrator complex subunit 11 (Mus musculus (Mouse)).